A 179-amino-acid chain; its full sequence is Large ribosomal subunit protein uL5 (179 aa).

The protein belongs to the universal ribosomal protein uL5 family. Part of the 50S ribosomal subunit; part of the 5S rRNA/L5/L18/L25 subcomplex. Contacts the 5S rRNA and the P site tRNA. Forms a bridge to the 30S subunit in the 70S ribosome.

Its function is as follows. This is one of the proteins that bind and probably mediate the attachment of the 5S RNA into the large ribosomal subunit, where it forms part of the central protuberance. In the 70S ribosome it contacts protein S13 of the 30S subunit (bridge B1b), connecting the 2 subunits; this bridge is implicated in subunit movement. Contacts the P site tRNA; the 5S rRNA and some of its associated proteins might help stabilize positioning of ribosome-bound tRNAs. This chain is Large ribosomal subunit protein uL5, found in Proteus mirabilis (strain HI4320).